Reading from the N-terminus, the 319-residue chain is High mobility group B protein 10 (319 aa).

The span at M1–H13 shows a compositional bias: polar residues. The segment at M1–K25 is disordered. Residues V40 to Y131 enclose the ARID domain. Residues P203–S220 are compositionally biased toward polar residues. A disordered region spans residues P203–L230. Positions P238–K305 form a DNA-binding region, HMG box.

As to expression, ubiquitously expressed.

Its subcellular location is the nucleus. Its function is as follows. Binds preferentially DNA with A/T-rich content. This chain is High mobility group B protein 10 (HMGB10), found in Arabidopsis thaliana (Mouse-ear cress).